A 738-amino-acid polypeptide reads, in one-letter code: Eukaryotic translation initiation factor 3 subunit B (738 aa).

A compositionally biased stretch (polar residues) spans 1-10; sequence MAPSFENLSE. The tract at residues 1–20 is disordered; sequence MAPSFENLSEQDLHEEEEEE. In terms of domain architecture, RRM spans 40–126; that stretch reads TFVVIDGLPV…HTLLVNKLMD (87 aa). 6 WD repeats span residues 193–230, 232–289, 301–342, 454–494, 511–554, and 569–607; these read AHWT…KQKQ, PHPF…RSFV, QPKK…LLGK, SLKD…SFFA, IEKK…EKND, and VDHY…HTFS. The segment at 693-720 is disordered; that stretch reads EAYGLPEEADQPKAAKDAPTNTEDKGET. Residues 702–720 are compositionally biased toward basic and acidic residues; that stretch reads DQPKAAKDAPTNTEDKGET.

This sequence belongs to the eIF-3 subunit B family. Component of the eukaryotic translation initiation factor 3 (eIF-3) complex.

The protein resides in the cytoplasm. In terms of biological role, RNA-binding component of the eukaryotic translation initiation factor 3 (eIF-3) complex, which is involved in protein synthesis of a specialized repertoire of mRNAs and, together with other initiation factors, stimulates binding of mRNA and methionyl-tRNAi to the 40S ribosome. The eIF-3 complex specifically targets and initiates translation of a subset of mRNAs involved in cell proliferation. The protein is Eukaryotic translation initiation factor 3 subunit B (prt1) of Emericella nidulans (strain FGSC A4 / ATCC 38163 / CBS 112.46 / NRRL 194 / M139) (Aspergillus nidulans).